Here is a 353-residue protein sequence, read N- to C-terminus: Adenine deaminase (353 aa).

Positions 19, 21, and 208 each coordinate Zn(2+). Glu211 serves as the catalytic Proton donor. Residue Asp289 participates in Zn(2+) binding. Asp290 contributes to the substrate binding site.

It belongs to the metallo-dependent hydrolases superfamily. Adenosine and AMP deaminases family. Adenine deaminase type 2 subfamily. Zn(2+) serves as cofactor.

The protein resides in the cytoplasm. The protein localises to the nucleus. It carries out the reaction adenine + H2O + H(+) = hypoxanthine + NH4(+). In terms of biological role, catalyzes the hydrolytic deamination of adenine to hypoxanthine. Plays an important role in the purine salvage pathway and in nitrogen catabolism. The sequence is that of Adenine deaminase from Gibberella zeae (strain ATCC MYA-4620 / CBS 123657 / FGSC 9075 / NRRL 31084 / PH-1) (Wheat head blight fungus).